The primary structure comprises 435 residues: ATP-dependent protease ATPase subunit HslU (435 aa).

ATP is bound by residues Ile18, 60-65 (GVGKTE), Asp248, Glu313, and Arg385.

The protein belongs to the ClpX chaperone family. HslU subfamily. In terms of assembly, a double ring-shaped homohexamer of HslV is capped on each side by a ring-shaped HslU homohexamer. The assembly of the HslU/HslV complex is dependent on binding of ATP.

The protein resides in the cytoplasm. In terms of biological role, ATPase subunit of a proteasome-like degradation complex; this subunit has chaperone activity. The binding of ATP and its subsequent hydrolysis by HslU are essential for unfolding of protein substrates subsequently hydrolyzed by HslV. HslU recognizes the N-terminal part of its protein substrates and unfolds these before they are guided to HslV for hydrolysis. In Sinorhizobium medicae (strain WSM419) (Ensifer medicae), this protein is ATP-dependent protease ATPase subunit HslU.